The sequence spans 178 residues: Peptide methionine sulfoxide reductase MsrA (178 aa).

C12 is an active-site residue.

It belongs to the MsrA Met sulfoxide reductase family.

It carries out the reaction L-methionyl-[protein] + [thioredoxin]-disulfide + H2O = L-methionyl-(S)-S-oxide-[protein] + [thioredoxin]-dithiol. It catalyses the reaction [thioredoxin]-disulfide + L-methionine + H2O = L-methionine (S)-S-oxide + [thioredoxin]-dithiol. Its function is as follows. Has an important function as a repair enzyme for proteins that have been inactivated by oxidation. Catalyzes the reversible oxidation-reduction of methionine sulfoxide in proteins to methionine. The chain is Peptide methionine sulfoxide reductase MsrA from Erwinia tasmaniensis (strain DSM 17950 / CFBP 7177 / CIP 109463 / NCPPB 4357 / Et1/99).